Reading from the N-terminus, the 733-residue chain is Phosphoribosylformylglycinamidine synthase subunit PurL (733 aa).

His42 is a catalytic residue. The ATP site is built by Tyr45 and Lys84. Residue Glu86 participates in Mg(2+) binding. Residues 87 to 90 (SHNH) and Arg109 contribute to the substrate site. The active-site Proton acceptor is His88. Asp110 is a binding site for Mg(2+). Gln233 lines the substrate pocket. Asp261 contacts Mg(2+). 305–307 (ESQ) is a binding site for substrate. The ATP site is built by Asp489 and Gly526. Residue Asn527 coordinates Mg(2+). Ser529 is a binding site for substrate.

It belongs to the FGAMS family. In terms of assembly, monomer. Part of the FGAM synthase complex composed of 1 PurL, 1 PurQ and 2 PurS subunits.

Its subcellular location is the cytoplasm. It carries out the reaction N(2)-formyl-N(1)-(5-phospho-beta-D-ribosyl)glycinamide + L-glutamine + ATP + H2O = 2-formamido-N(1)-(5-O-phospho-beta-D-ribosyl)acetamidine + L-glutamate + ADP + phosphate + H(+). It participates in purine metabolism; IMP biosynthesis via de novo pathway; 5-amino-1-(5-phospho-D-ribosyl)imidazole from N(2)-formyl-N(1)-(5-phospho-D-ribosyl)glycinamide: step 1/2. Functionally, part of the phosphoribosylformylglycinamidine synthase complex involved in the purines biosynthetic pathway. Catalyzes the ATP-dependent conversion of formylglycinamide ribonucleotide (FGAR) and glutamine to yield formylglycinamidine ribonucleotide (FGAM) and glutamate. The FGAM synthase complex is composed of three subunits. PurQ produces an ammonia molecule by converting glutamine to glutamate. PurL transfers the ammonia molecule to FGAR to form FGAM in an ATP-dependent manner. PurS interacts with PurQ and PurL and is thought to assist in the transfer of the ammonia molecule from PurQ to PurL. This Moorella thermoacetica (strain ATCC 39073 / JCM 9320) protein is Phosphoribosylformylglycinamidine synthase subunit PurL.